The chain runs to 46 residues: MELATLVTLFVSGLLMSFTGYALYTAFGQPSQQLRDPFEEHGNELK.

The chain crosses the membrane as a helical span at residues 5-27 (TLVTLFVSGLLMSFTGYALYTAF).

This sequence belongs to the PsbN family.

It is found in the plastid membrane. In terms of biological role, may play a role in photosystem I and II biogenesis. The chain is Protein PsbN from Cuscuta obtusiflora (Peruvian dodder).